A 251-amino-acid chain; its full sequence is MTLTAESGPLAGSRTDVAGELRHVDKWYGNRHVLQDVSLQIPSGQIVALIGRSGSGKSTVLRVLAGLSHDHTGRRLVAGAPALAFQEPRLFPWRDVRTNVGYGLTRTRLPRAQVRRRAERALADVGLADHARAWPLTLSGGQAQRVSLARALVAEPRLLLLDEPFGALDALTRLSMHTLLLDLWRRHGFGVLLVTHDVDEAVALADRVLVLEDGRVVHELAIDPPRRTPGEPGAHTERYRAELLDRLGVRQ.

An ABC transporter domain is found at G19 to R238. G51 to S58 contacts ATP.

Belongs to the ABC transporter superfamily. Aliphatic sulfonates importer (TC 3.A.1.17.2) family. The complex is composed of two ATP-binding proteins (SsuB), two transmembrane proteins (SsuC) and a solute-binding protein (SsuA).

The protein resides in the cell membrane. The enzyme catalyses ATP + H2O + aliphatic sulfonate-[sulfonate-binding protein]Side 1 = ADP + phosphate + aliphatic sulfonateSide 2 + [sulfonate-binding protein]Side 1.. Its function is as follows. Part of the ABC transporter complex SsuABC involved in aliphatic sulfonates import. Responsible for energy coupling to the transport system. This is Aliphatic sulfonates import ATP-binding protein SsuB from Mycobacterium avium (strain 104).